A 535-amino-acid chain; its full sequence is Expansin-like protein 9 (535 aa).

Positions 1-25 are cleaved as a signal peptide; it reads MKINKNNYFKIIIFIIYVIINLINA. Residue asparagine 24 is glycosylated (N-linked (GlcNAc...) asparagine). Residues 26–514 lie on the Extracellular side of the membrane; sequence SDNVKLSNCG…DNSSNILLFS (489 aa). An Expansin-like EG45 domain is found at 31–144; that stretch reads LSNCGQARAE…QEVSCGFLGN (114 aa). Cystine bridges form between cysteine 34-cysteine 75 and cysteine 78-cysteine 139. Asparagine 122, asparagine 257, and asparagine 292 each carry an N-linked (GlcNAc...) asparagine glycan. The segment at 459–487 is disordered; that stretch reads VDGSSNDDDGTGGTGGGASNKVGKRVDGE. N-linked (GlcNAc...) asparagine glycosylation is present at asparagine 506. A helical transmembrane segment spans residues 515–535; sequence FNITLTFLLLSLIINILLLLF.

It belongs to the expansin family. Expansin A subfamily.

The protein localises to the membrane. Its function is as follows. May serve to lubricate the movement of the cellulose microfibrils during cell growth and wall extension and/or may serve to maintain the fluid state of the slug cell wall. The polypeptide is Expansin-like protein 9 (expl9) (Dictyostelium discoideum (Social amoeba)).